The following is a 399-amino-acid chain: Sperm equatorial segment protein 1 (399 aa).

A signal peptide spans 1 to 18 (MKLVVLVALWLWPSSLLA). Residue asparagine 128 is glycosylated (N-linked (GlcNAc...) asparagine). Basic and acidic residues predominate over residues 136–145 (EEPFIEKEPE). The disordered stretch occupies residues 136 to 250 (EEPFIEKEPE…PSAEDLPGRH (115 aa)). Over residues 157–167 (PEPELEPEPEP) the composition is skewed to acidic residues. Over residues 182-206 (VTSTTPNKELTGTSRISSMATQPAN) the composition is skewed to polar residues. Low complexity predominate over residues 207–225 (TQATRITVTVKTTSTMDVS).

It belongs to the SPESP1 family. In terms of processing, glycosylated. In testis there are two predominant forms of 77- and 67-kDa and a form of 47-kDa, whereas in epididymal sperm from caput, corpus, and cauda there are two forms of 47- and 43-kDa. Testis forms contain complex carbohydrate residues. Epididymal sperm forms are N-glycosylated. Then undergoes significant glycosylation in the testis and that the majority of these glycoconjugates are removed by the time sperm reach the caput epididymis. Testis specific.

Its subcellular location is the cytoplasmic vesicle. It is found in the secretory vesicle. The protein resides in the acrosome. Involved in fertilization ability of sperm. This Mus musculus (Mouse) protein is Sperm equatorial segment protein 1.